The primary structure comprises 108 residues: Small ribosomal subunit protein eS25x (108 aa).

Residues Met-1–Lys-36 are disordered. The span at Lys-22–Gly-31 shows a compositional bias: basic residues.

It belongs to the eukaryotic ribosomal protein eS25 family.

The protein is Small ribosomal subunit protein eS25x (RPS25D) of Arabidopsis thaliana (Mouse-ear cress).